Consider the following 834-residue polypeptide: Glycerol-3-phosphate acyltransferase (834 aa).

The HXXXXD motif signature appears at 309–314 (CHRSHI).

Belongs to the GPAT/DAPAT family.

It localises to the cell inner membrane. The catalysed reaction is sn-glycerol 3-phosphate + an acyl-CoA = a 1-acyl-sn-glycero-3-phosphate + CoA. It functions in the pathway phospholipid metabolism; CDP-diacylglycerol biosynthesis; CDP-diacylglycerol from sn-glycerol 3-phosphate: step 1/3. This chain is Glycerol-3-phosphate acyltransferase, found in Pseudomonas fluorescens (strain Pf0-1).